The sequence spans 120 residues: Non-specific lipid-transfer protein 2 (120 aa).

An N-terminal signal peptide occupies residues 1–25 (MATSMKLACVALVMCMVVIAPMAEA). Intrachain disulfides connect cysteine 29–cysteine 78, cysteine 39–cysteine 55, cysteine 56–cysteine 101, and cysteine 76–cysteine 115.

The protein belongs to the plant LTP family. As to expression, expressed in roots, stem, leaves and tendrils of the mature plant.

Functionally, plant non-specific lipid-transfer proteins transfer phospholipids as well as galactolipids across membranes. May play a role in wax or cutin deposition in the cell walls of expanding epidermal cells and certain secretory tissues. The chain is Non-specific lipid-transfer protein 2 from Pisum sativum (Garden pea).